Reading from the N-terminus, the 274-residue chain is Orotidine 5'-phosphate decarboxylase (274 aa).

Substrate contacts are provided by residues Asp-40, Lys-62–His-64, Asp-93–Thr-102, Tyr-227, and Arg-245. The active-site Proton donor is the Lys-95.

Belongs to the OMP decarboxylase family.

The enzyme catalyses orotidine 5'-phosphate + H(+) = UMP + CO2. The protein operates within pyrimidine metabolism; UMP biosynthesis via de novo pathway; UMP from orotate: step 2/2. The sequence is that of Orotidine 5'-phosphate decarboxylase (URA3) from Coccidioides immitis (strain RS) (Valley fever fungus).